The chain runs to 270 residues: Formamidopyrimidine-DNA glycosylase (270 aa).

Catalysis depends on proline 2, which acts as the Schiff-base intermediate with DNA. The active-site Proton donor is the glutamate 3. Catalysis depends on lysine 58, which acts as the Proton donor; for beta-elimination activity. Residues histidine 91, arginine 110, and arginine 151 each contribute to the DNA site. The segment at 236 to 270 adopts an FPG-type zinc-finger fold; that stretch reads LVYGRDGLPCPNCGRALKHATIGQRASVWCSHCQR. The Proton donor; for delta-elimination activity role is filled by arginine 260.

It belongs to the FPG family. As to quaternary structure, monomer. The cofactor is Zn(2+).

It carries out the reaction Hydrolysis of DNA containing ring-opened 7-methylguanine residues, releasing 2,6-diamino-4-hydroxy-5-(N-methyl)formamidopyrimidine.. The catalysed reaction is 2'-deoxyribonucleotide-(2'-deoxyribose 5'-phosphate)-2'-deoxyribonucleotide-DNA = a 3'-end 2'-deoxyribonucleotide-(2,3-dehydro-2,3-deoxyribose 5'-phosphate)-DNA + a 5'-end 5'-phospho-2'-deoxyribonucleoside-DNA + H(+). Functionally, involved in base excision repair of DNA damaged by oxidation or by mutagenic agents. Acts as a DNA glycosylase that recognizes and removes damaged bases. Has a preference for oxidized purines, such as 7,8-dihydro-8-oxoguanine (8-oxoG). Has AP (apurinic/apyrimidinic) lyase activity and introduces nicks in the DNA strand. Cleaves the DNA backbone by beta-delta elimination to generate a single-strand break at the site of the removed base with both 3'- and 5'-phosphates. The chain is Formamidopyrimidine-DNA glycosylase from Stenotrophomonas maltophilia (strain K279a).